We begin with the raw amino-acid sequence, 270 residues long: Aliphatic sulfonates import ATP-binding protein SsuB (270 aa).

One can recognise an ABC transporter domain in the interval 17–238; that stretch reads LASSGLRKTF…ARGSHRLAAL (222 aa). 49–56 serves as a coordination point for ATP; the sequence is GRSGCGKS. Residues 249–270 form a disordered region; sequence APGAAPEPDPVAPLPTQLRWAH.

It belongs to the ABC transporter superfamily. Aliphatic sulfonates importer (TC 3.A.1.17.2) family. The complex is composed of two ATP-binding proteins (SsuB), two transmembrane proteins (SsuC) and a solute-binding protein (SsuA).

Its subcellular location is the cell inner membrane. It catalyses the reaction ATP + H2O + aliphatic sulfonate-[sulfonate-binding protein]Side 1 = ADP + phosphate + aliphatic sulfonateSide 2 + [sulfonate-binding protein]Side 1.. Functionally, part of the ABC transporter complex SsuABC involved in aliphatic sulfonates import. Responsible for energy coupling to the transport system. The chain is Aliphatic sulfonates import ATP-binding protein SsuB from Pseudomonas putida (Arthrobacter siderocapsulatus).